Here is a 325-residue protein sequence, read N- to C-terminus: Cytochrome f (325 aa).

Residues 1–40 (MSKINLSTMWSSFIKKIAKTILVAIACISLFLTSSPAANA) form the signal peptide. Residues Tyr-41, Cys-62, Cys-65, and His-66 each coordinate heme. Residues 291 to 311 (VKWLMAFFALVMLAQIMLVLK) traverse the membrane as a helical segment.

This sequence belongs to the cytochrome f family. In terms of assembly, the 4 large subunits of the cytochrome b6-f complex are cytochrome b6, subunit IV (17 kDa polypeptide, PetD), cytochrome f and the Rieske protein, while the 4 small subunits are PetG, PetL, PetM and PetN. The complex functions as a dimer. Heme serves as cofactor.

Its subcellular location is the cellular thylakoid membrane. Its function is as follows. Component of the cytochrome b6-f complex, which mediates electron transfer between photosystem II (PSII) and photosystem I (PSI), cyclic electron flow around PSI, and state transitions. This Trichodesmium erythraeum (strain IMS101) protein is Cytochrome f.